A 273-amino-acid polypeptide reads, in one-letter code: Large ribosomal subunit protein uL2cz/uL2cy (273 aa).

2 disordered regions span residues 1 to 25 (MAIHLYKTSTSSTRNGAVDSQVKSN) and 224 to 273 (NPVD…RRRK).

It belongs to the universal ribosomal protein uL2 family. Part of the 50S ribosomal subunit.

It is found in the plastid. Its subcellular location is the chloroplast. In Phalaenopsis aphrodite subsp. formosana (Moth orchid), this protein is Large ribosomal subunit protein uL2cz/uL2cy (rpl2-A).